Reading from the N-terminus, the 322-residue chain is Cyclin mcs2 (322 aa).

Ser-310 is subject to Phosphoserine.

It belongs to the cyclin family. Cyclin C subfamily. As to quaternary structure, one of the nine subunits forming the core-TFIIH basal transcription factor. Interacts with crk1 and skp1.

It is found in the nucleus. Functionally, essential for progression through the cell cycle. Possesses kinase activity that can be detected when myelin basic protein (MBP) is provided as an exogenous substrate. This Schizosaccharomyces pombe (strain 972 / ATCC 24843) (Fission yeast) protein is Cyclin mcs2 (mcs2).